A 146-amino-acid chain; its full sequence is Putative actin-depolymerizing factor 8 (146 aa).

Residues 14–144 (PAWIEVPEKS…DLEVLRGRAN (131 aa)) form the ADF-H domain.

It belongs to the actin-binding proteins ADF family.

In terms of biological role, actin-depolymerizing protein. Severs actin filaments (F-actin) and binds to actin monomers. The polypeptide is Putative actin-depolymerizing factor 8 (ADF8) (Oryza sativa subsp. japonica (Rice)).